Reading from the N-terminus, the 103-residue chain is Small ribosomal subunit protein uS10 (103 aa).

The protein belongs to the universal ribosomal protein uS10 family. As to quaternary structure, part of the 30S ribosomal subunit.

Involved in the binding of tRNA to the ribosomes. The sequence is that of Small ribosomal subunit protein uS10 from Alkalilimnicola ehrlichii (strain ATCC BAA-1101 / DSM 17681 / MLHE-1).